The following is a 362-amino-acid chain: Formate dehydrogenase (362 aa).

The substrate site is built by valine 93 and asparagine 119. NAD(+) contacts are provided by residues 174–175, aspartate 195, 230–234, threonine 256, aspartate 282, 311–314, and serine 357; these read RI, PLHAG, and HYSG.

This sequence belongs to the D-isomer specific 2-hydroxyacid dehydrogenase family. FDH subfamily. As to quaternary structure, homodimer.

It is found in the cytoplasm. It carries out the reaction formate + NAD(+) = CO2 + NADH. Its function is as follows. Catalyzes the NAD(+)-dependent oxidation of formate to carbon dioxide. Formate oxidation is the final step in the methanol oxidation pathway in methylotrophic microorganisms. Has a role in the detoxification of exogenous formate in non-methylotrophic organisms. In Pichia angusta (Yeast), this protein is Formate dehydrogenase.